A 1048-amino-acid polypeptide reads, in one-letter code: Copper-dependent transcription factor 1 (1048 aa).

The copper-fist DNA-binding region spans 1-40 (MVLINDKKFACEKCIKGHRVSACTHTDRPLFEVKKKGRPS). Cys-11, Cys-14, Cys-23, and His-25 together coordinate Zn(2+). Positions 85–99 (ANESGGASATANTSA) are enriched in low complexity. 2 disordered regions span residues 85–117 (ANESGGASATANTSAEPEIETRKGQPGSKPTFP) and 178–273 (HSGH…RPPV). The span at 211–222 (TRNSPTSINSSE) shows a compositional bias: polar residues. The short motif at 348-362 (CMCGDDCSCPGCATH) is the CRM-I element. A CRM-II motif is present at residues 455–482 (CCGGKCGCPPGECACTKQCCGCCGECTC). 2 disordered regions span residues 506-702 (SSCG…PLNS) and 835-876 (GPSG…WKFP). Polar residues-rich tracts occupy residues 527–536 (QIPQSVSPTS), 550–565 (PVSTIHHSTLSPSFNT), 629–645 (GSMTATKRSGTSTGVRR), 664–682 (SIQSSSDRSFYIGSPSNQI), and 692–702 (APSQMTAPLNS). Positions 835–845 (GPSGPSAIPAT) are enriched in low complexity. Polar residues predominate over residues 846–868 (NIPSRHTTPQASRPLTPPESSFT).

The protein resides in the nucleus. It is found in the cytoplasm. Its subcellular location is the cell cortex. In terms of biological role, transcription factor that regulates copper acquisition and homeostasis, and which plays a central role in fungal pathogenesis during neurologic infection. The transcriptional regulation exerted by CUF1 is intrinsically complex since it acts as a dual sensor of copper levels, responsible for expression of a set of copper-specific copper transporters, CTR1 and CTR4, at low copper concentrations, and 2 metallothioneins, CMT1 and CMT2, at high copper concentrations. Positively regulates the expression of the copper acquisition factor BIM1 under copper-limiting conditions. Also positively regulates the expression of super oxide dismutase SOD2 isoform 2 during oxidative stress and copper-limiting conditions. Negatively regulates the expression of super oxide dismutase SOD1 during copper-limiting conditions. Also regulates ATM1, an ABC transporter with functions in the iron-sulfur clusters (ISC) export machinery, during copper stress. Another target of CUF1 is the gene encoding the laccase LAC1. Binds promoters of target genes at Cu-responsive elements (CuREs) that contain a variable A/T rich 5' region followed by the core consensus sequence 5'-G(G/C)CTC(A/G)-3'. Negatively regulates capsule biosynthesis, probably via modulating iron acquisition through the high-affinity iron uptake pathway. This Cryptococcus neoformans var. grubii serotype A (strain H99 / ATCC 208821 / CBS 10515 / FGSC 9487) (Filobasidiella neoformans var. grubii) protein is Copper-dependent transcription factor 1.